The chain runs to 269 residues: DNA-binding protein RFXANK (269 aa).

Residues 1-36 (MEPTQVAENLVPNQQPPVPDLEDPEDTRDESPENSD) are disordered. ANK repeat units follow at residues 88–127 (LDSLSIHQLAAQGELSQLKDHLRKGACPACTCLSGNNLIN), 132–161 (RGFTPLIWASAFGEIETVRFLLDWGADPHI), 165–194 (ERESALSLASMGGYTDIVRLLLDRDVDINI), 198–227 (NGGTPLLYAVRGNHVKCVEALLARGADLTT), and 231–260 (SGYTPMDLAVALGYRKVQQVMESHILRLFQ).

As to quaternary structure, forms homodimers. The RFX heterotetrameric complex consists of 2 molecules of RFX5 and one each of RFXAP and RFX-B/RFXANK; with each subunit representing a separate complementation group. Interacts (via ankyrin repeats) with RFX5 (via PxLPxI/L motif); the interaction is direct. RFX forms cooperative DNA binding complexes with X2BP and CBF/NF-Y. RFX associates with CIITA to form an active transcriptional complex. Interacts with RAF1. Interacts with RFX7. In terms of processing, phosphorylated by RAF1. In terms of tissue distribution, expressed primarily in thymus, lung and testis.

It localises to the cytoplasm. The protein localises to the nucleus. In terms of biological role, activates transcription from class II MHC promoters. Activation requires the activity of the MHC class II transactivator/CIITA. May regulate other genes in the cell. RFX binds the X1 box of MHC-II promoters. May also potentiate the activation of RAF1. The sequence is that of DNA-binding protein RFXANK (Rfxank) from Mus musculus (Mouse).